The chain runs to 613 residues: Proteasome-associated ATPase (613 aa).

The disordered stretch occupies residues 1–29; it reads MSESERSEGFPEGFAGAGSGSLSSEDAAE. Residues 23–100 are a coiled coil; sequence SSEDAAELEA…LREEVDRLGQ (78 aa). ATP is bound at residue 300 to 305; it reads GCGKTL. An Isoglutamyl lysine isopeptide (Lys-Gln) (interchain with Q-Cter in protein Pup) cross-link involves residue Lys-595. Residues 612–613 are docks into pockets in the proteasome alpha-ring; that stretch reads YL.

Belongs to the AAA ATPase family. As to quaternary structure, homohexamer. Assembles into a hexameric ring structure that caps the 20S proteasome core. Strongly interacts with the prokaryotic ubiquitin-like protein Pup through a hydrophobic interface; the interacting region of ARC lies in its N-terminal coiled-coil domain. There is one Pup binding site per ARC hexamer ring. Upon ATP-binding, the C-terminus of ARC interacts with the alpha-rings of the proteasome core, possibly by binding to the intersubunit pockets.

It functions in the pathway protein degradation; proteasomal Pup-dependent pathway. Functionally, ATPase which is responsible for recognizing, binding, unfolding and translocation of pupylated proteins into the bacterial 20S proteasome core particle. May be essential for opening the gate of the 20S proteasome via an interaction with its C-terminus, thereby allowing substrate entry and access to the site of proteolysis. Thus, the C-termini of the proteasomal ATPase may function like a 'key in a lock' to induce gate opening and therefore regulate proteolysis. This is Proteasome-associated ATPase from Mycolicibacterium smegmatis (strain ATCC 700084 / mc(2)155) (Mycobacterium smegmatis).